Here is a 1466-residue protein sequence, read N- to C-terminus: Immediate-early protein 2 (1466 aa).

8 disordered regions span residues 1–21 (MEPAKPSGNNMGSNDERMQDY), 223–242 (NRGYDYNFRHHSYRPRGGNG), 339–370 (YNHPTKAQTIPETTKTKKHKATKDNETSRGNQ), 428–472 (RCRS…VTKA), 517–965 (RSKT…TSIN), 1005–1068 (FRPH…CRSN), 1086–1179 (SRTR…SENA), and 1191–1223 (TTSHLHQKQNVKLHNTKKCKKKRPRDDDSDSSI). Positions 339–350 (YNHPTKAQTIPE) are enriched in polar residues. Positions 428 to 437 (RCRSVQKKKE) are enriched in basic residues. 2 stretches are compositionally biased toward basic and acidic residues: residues 443–472 (NKHDENHASSRSDLKERKSNEHEDKAVTKA) and 536–553 (PTKDNSYKKHHDSKDNYP). Polar residues-rich tracts occupy residues 583–595 (KNVSGKATSTSPK) and 640–665 (KNHTASADKNLTDNSPIRSNLNPTAF). Positions 666-681 (NKSNNNKSITNSTSNS) are enriched in low complexity. Residues 696-713 (NESKDPNRTCGKNSDKHL) are compositionally biased toward basic and acidic residues. 2 stretches are compositionally biased toward low complexity: residues 720 to 756 (ASKRAPSRASSRTSSRASSRASSRASSRASSRASSRA) and 763 to 772 (RASSRAPSRA). A compositionally biased stretch (basic and acidic residues) spans 773–790 (SSRDSSRASSRDSSRDSN). A compositionally biased stretch (low complexity) spans 791 to 800 (RASSKASSRA). The segment covering 801–814 (SSRDSSRASSRDSS) has biased composition (basic and acidic residues). Composition is skewed to low complexity over residues 826-884 (SRAS…SSRA) and 926-940 (SRASSRASSRASSRA). A compositionally biased stretch (polar residues) spans 955 to 965 (RQTPPHDTSIN). Residues 989-1037 (ARLQCFNHNDQFYNPRFRPHIRTNRKKSESTNDTDSESSMSRCKSHCRN) are interaction with human UBE2I. Low complexity-rich tracts occupy residues 1019–1029 (TNDTDSESSMS), 1053–1068 (GSSSISSSIEENCRSN), and 1086–1110 (SRTRSSSSSSSSSSASLSCSKSTLK). The segment covering 1116-1131 (QNRDNKQIKSKSDSKH) has biased composition (basic and acidic residues). Positions 1162–1177 (HNSSPFNTHEQSNHSE) are enriched in polar residues. Residues 1195–1213 (LHQKQNVKLHNTKKCKKKR) show a composition bias toward basic residues.

It belongs to the herpesviridae IE2 family. In terms of assembly, interacts with human UBE2I in the nucleus. Although this interaction does not promote IE2 sumoylation, it represses transactivation activity.

It localises to the host nucleus. In terms of biological role, transcriptional transactivator. The protein is Immediate-early protein 2 (U90/U86) of Homo sapiens (Human).